Here is a 1720-residue protein sequence, read N- to C-terminus: DNA-directed RNA polymerase I subunit RPA1 (1720 aa).

Positions 64, 67, 74, 77, 104, and 107 each coordinate Zn(2+). Positions 110-201 are clamp; sequence LTCPRAVIHL…IALFWKAHMN (92 aa). Zn(2+) is bound by residues cysteine 205 and cysteine 208. Residue serine 240 is modified to Phosphoserine. The segment at 320–426 is clamp; it reads FTNGQTVNLQ…IRQILEKKEG (107 aa). The interval 403 to 416 is rudder; that stretch reads DSEMDKLMMDKYPG. Lysine 424, arginine 429, and arginine 436 together coordinate DNA. An involved in RRN3 binding to Pol I complex region spans residues 468–542; sequence YPQPVTPWNV…QGTKIVCRHV (75 aa). Position 552 (arginine 552) interacts with RNA. The Mg(2+) site is built by aspartate 588, aspartate 590, and aspartate 592. Aspartate 592 lines the RNA pocket. Residues 805–883 are funnel; the sequence is KPKADVKRQR…NEINKACMPF (79 aa). The tract at residues 960–1001 is bridging helix; that stretch reads KPPEFFFHCMAGREGLVDTAVKTSRSGYLQRCIIKHLEGLVV. The tract at residues 1060–1155 is mediates the interaction with TOP2A; sequence ADPKKALHHF…SLSVWRPDIY (96 aa). A trigger loop region spans residues 1207–1248; it reads PGEAVGLLAAQSIGEPSTQMTLNTFHFAGRGEMNVTLGIPRL. DNA is bound at residue arginine 1249. The tract at residues 1365–1498 is disordered; it reads RNVNTRRATQ…SQEPQGPEAM (134 aa). The span at 1373-1390 shows a compositional bias: basic and acidic residues; the sequence is TQRDLDNAGELGRSRGEQ. Residue serine 1386 is modified to Phosphoserine. 2 stretches are compositionally biased toward acidic residues: residues 1391–1412 and 1422–1446; these read EGDE…DADA and EEEV…EDMQ. Residues 1447 to 1461 are compositionally biased toward basic and acidic residues; the sequence is EERNPHREGARKTQE. Residues 1462-1474 show a composition bias toward acidic residues; it reads QDEEVGLGTEEDP.

The protein belongs to the RNA polymerase beta' chain family. As to quaternary structure, component of the RNA polymerase I (Pol I) complex consisting of 13 subunits: a ten-subunit catalytic core composed of POLR1A/RPA1, POLR1B/RPA2, POLR1C/RPAC1, POLR1D/RPAC2, POLR1H/RPA12, POLR2E/RPABC1, POLR2F/RPABC2, POLR2H/RPABC3, POLR2K/RPABC4 and POLR2L/RPABC5; a mobile stalk subunit POLR1F/RPA43 protruding from the core and additional subunits homologous to general transcription factors POLR1E/RPA49 and POLR1G/RPA34. Part of Pol I pre-initiation complex (PIC), in which Pol I core assembles with RRN3 and promoter-bound UTBF and SL1/TIF-IB complex. Interacts (via dock II domain) with TOP2A; this interaction may assist Pol I transcription initiation by releasing supercoils occurring during DNA unwinding. Interacts with CAVIN1; this interaction induces the dissociation of Pol I complex paused at rDNA terminator sequences. Interacts with MYO1C. Interacts with ERBB2. Interacts with DDX11. Interacts with RECQL5. It depends on Mg(2+) as a cofactor.

It is found in the nucleus. The protein localises to the nucleolus. The protein resides in the chromosome. It catalyses the reaction RNA(n) + a ribonucleoside 5'-triphosphate = RNA(n+1) + diphosphate. Its function is as follows. Catalytic core component of RNA polymerase I (Pol I), a DNA-dependent RNA polymerase which synthesizes ribosomal RNA precursors using the four ribonucleoside triphosphates as substrates. Transcribes 47S pre-rRNAs from multicopy rRNA gene clusters, giving rise to 5.8S, 18S and 28S ribosomal RNAs. Pol I-mediated transcription cycle proceeds through transcription initiation, transcription elongation and transcription termination stages. During transcription initiation, Pol I pre-initiation complex (PIC) is recruited by the selectivity factor 1 (SL1/TIF-IB) complex bound to the core promoter that precedes an rDNA repeat unit. The PIC assembly bends the promoter favoring the formation of the transcription bubble and promoter escape. Once the polymerase has escaped from the promoter it enters the elongation phase during which RNA is actively polymerized, based on complementarity with the template DNA strand. Highly processive, assembles in structures referred to as 'Miller trees' where many elongating Pol I complexes queue and transcribe the same rDNA coding regions. At terminator sequences downstream of the rDNA gene, PTRF interacts with Pol I and halts Pol I transcription leading to the release of the RNA transcript and polymerase from the DNA. Forms Pol I active center together with the second largest subunit POLR1B/RPA2. Appends one nucleotide at a time to the 3' end of the nascent RNA, with POLR1A/RPA1 contributing a Mg(2+)-coordinating DxDGD motif, and POLR1B/RPA2 participating in the coordination of a second Mg(2+) ion and providing lysine residues believed to facilitate Watson-Crick base pairing between the incoming nucleotide and the template base. Typically, Mg(2+) ions direct a 5' nucleoside triphosphate to form a phosphodiester bond with the 3' hydroxyl of the preceding nucleotide of the nascent RNA, with the elimination of pyrophosphate. Has proofreading activity: Pauses and backtracks to allow the cleavage of a missincorporated nucleotide via POLR1H/RPA12. High Pol I processivity is associated with decreased transcription fidelity. The protein is DNA-directed RNA polymerase I subunit RPA1 of Homo sapiens (Human).